The sequence spans 241 residues: Tetrahydromethanopterin S-methyltransferase subunit A (241 aa).

Residues Met-1–Gly-220 lie on the Cytoplasmic side of the membrane. His-85 lines the 5-hydroxybenzimidazolylcob(I)amide pocket. A helical membrane pass occupies residues Lys-221 to Phe-241.

This sequence belongs to the MtrA family. As to quaternary structure, the complex is composed of 8 subunits; MtrA, MtrB, MtrC, MtrD, MtrE, MtrF, MtrG and MtrH. It depends on 5-hydroxybenzimidazolylcob(I)amide as a cofactor.

It localises to the cell membrane. It carries out the reaction 5-methyl-5,6,7,8-tetrahydromethanopterin + coenzyme M + 2 Na(+)(in) = 5,6,7,8-tetrahydromethanopterin + methyl-coenzyme M + 2 Na(+)(out). The protein operates within one-carbon metabolism; methanogenesis from CO(2); methyl-coenzyme M from 5,10-methylene-5,6,7,8-tetrahydromethanopterin: step 2/2. Its function is as follows. Part of a complex that catalyzes the formation of methyl-coenzyme M and tetrahydromethanopterin from coenzyme M and methyl-tetrahydromethanopterin. This is an energy-conserving, sodium-ion translocating step. The sequence is that of Tetrahydromethanopterin S-methyltransferase subunit A from Methanocaldococcus jannaschii (strain ATCC 43067 / DSM 2661 / JAL-1 / JCM 10045 / NBRC 100440) (Methanococcus jannaschii).